The sequence spans 380 residues: MFRLLSWSLGRGFLRAAGRRCRGCSARLLPGLAGGPGPEVQVPPSRVAPHGRGPGLLPLLAALAWFSRPAAAEEEEQQGADGAAAEDGADEAEAEIIQLLKRAKLSIMKDEPEEAELILHDALRLAYQTDNKKAITYTYDLMANLAFIRGQLENAEQLFKATMSYLLGGGMKQEDNAIIEISLKLASIYAAQNRQEFAVAGYEFCISTLEEKIEREKELAEDIMSVEEKANTHLLLGMCLDACARYLLFSKQPSQAQRMYEKALQISEEIQGERHPQTIVLMSDLATTLDAQGRFDEAYIYMQRASDLARQINHPELHMVLSNLAAVLMHRERYTQAKEIYQEALKQAKLKKDEISVQHIREELAELSKKSRPLTNSVKL.

The transit peptide at 1 to 70 (MFRLLSWSLG…AALAWFSRPA (70 aa)) directs the protein to the mitochondrion. 5 TPR repeats span residues 136 to 169 (TYTY…LLGG), 179 to 212 (IEIS…LEEK), 237 to 270 (GMCL…SEEI), 279 to 312 (IVLM…ARQI), and 318 to 351 (HMVL…AKLK).

The protein belongs to the TTC19 family. As to quaternary structure, binds to the mature mitochondrial complex III dimer, after the incorporation of the Rieske protein UQCRFS1. Interacts with UQCRC1 and UQCRFS1. Interacts with ZFYVE26 and CHMP4B. Proteolytically cleaved by PARL.

Its subcellular location is the mitochondrion inner membrane. Required for the preservation of the structural and functional integrity of mitochondrial respiratory complex III by allowing the physiological turnover of the Rieske protein UQCRFS1. Involved in the clearance of UQCRFS1 N-terminal fragments, which are produced upon incorporation of UQCRFS1 into the complex III and whose presence is detrimental for its catalytic activity. The protein is Tetratricopeptide repeat protein 19, mitochondrial (TTC19) of Homo sapiens (Human).